The chain runs to 257 residues: AN1-type zinc finger protein 2B (257 aa).

AN1-type zinc fingers lie at residues 4-52 (PDLG…QKDI) and 94-142 (KIFT…HQTS). Zn(2+) is bound by residues Cys-10, Cys-15, Cys-25, Cys-28, Cys-33, His-36, His-42, Cys-44, Cys-100, Cys-105, Cys-115, Cys-118, Cys-123, His-126, His-132, and Cys-134. Positions 141 to 151 (TSRAGLAAISR) are VCP/p97-interacting motif (VIM). Residues 152–184 (AQGLASTSTAPSPSRTLPSSSSPSRATPQLPTR) are disordered. Residues 155–179 (LASTSTAPSPSRTLPSSSSPSRATP) show a composition bias toward low complexity. 3 positions are modified to phosphoserine; by MAPK14: Ser-163, Ser-173, and Ser-187. 2 UIM domains span residues 197–216 (SEDE…AKPQ) and 221–240 (QEED…AEYQ). Residue Cys-254 is modified to Cysteine methyl ester. The S-geranylgeranyl cysteine moiety is linked to residue Cys-254. Residues 254 to 257 (CSLC) carry the CAAX motif motif. Positions 255-257 (SLC) are cleaved as a propeptide — removed in mature form.

As to quaternary structure, binds 'Lys-48'-linked polyubiquitin chains of ubiquitinated proteins. Associates with the proteasome complex; upon exposure to arsenite. Interacts (via VIM motif) with VCP; the interaction is direct. Interacts with BAG6. Interacts with IGF1R (nascent precursor form). Interacts with DERL1, FAF2, NPLOC4 and UFD1; probably through VCP. Phosphorylated by MAPK14. Phosphorylation has no effect on association with the proteasome complex.

The protein localises to the endoplasmic reticulum membrane. In terms of biological role, plays a role in protein homeostasis by regulating both the translocation and the ubiquitin-mediated proteasomal degradation of nascent proteins at the endoplasmic reticulum. It is involved in the regulation of signal-mediated translocation of proteins into the endoplasmic reticulum. It also plays a role in the ubiquitin-mediated proteasomal degradation of proteins for which signal-mediated translocation to the endoplasmic reticulum has failed. May therefore function in the endoplasmic reticulum stress-induced pre-emptive quality control, a mechanism that selectively attenuates the translocation of newly synthesized proteins into the endoplasmic reticulum and reroutes them to the cytosol for proteasomal degradation. By controlling the steady-state expression of the IGF1R receptor, indirectly regulates the insulin-like growth factor receptor signaling pathway. This is AN1-type zinc finger protein 2B from Mus musculus (Mouse).